Here is a 258-residue protein sequence, read N- to C-terminus: MQEKLKNDKLKIGKYEFDSRFILGSGKYSLELIKSAIEEAKAQIITLALRRANTGEIANILDYIPKNITLLPNTSGARNAEEALRIARLSRELGCGELIKIEVISDSRYLLPDNYETIKACELLAKEGFTPLPYMHADLYAARAMRDAGAAAIMPLAAPIGSNKGLCAKEFIQILLNEIDLPIIVDAGIGSPSQACEAMQMGVSAVMVNTAIAEAKDIALMARAFSLAVNAGRAAFLAGLASVSEAKASSPLTGFLRD.

Lys-100 acts as the Schiff-base intermediate with DXP in catalysis. Residues Gly-161, 187 to 188, and 209 to 210 contribute to the 1-deoxy-D-xylulose 5-phosphate site; these read AG and NT.

It belongs to the ThiG family. Homotetramer. Forms heterodimers with either ThiH or ThiS.

It localises to the cytoplasm. The catalysed reaction is [ThiS sulfur-carrier protein]-C-terminal-Gly-aminoethanethioate + 2-iminoacetate + 1-deoxy-D-xylulose 5-phosphate = [ThiS sulfur-carrier protein]-C-terminal Gly-Gly + 2-[(2R,5Z)-2-carboxy-4-methylthiazol-5(2H)-ylidene]ethyl phosphate + 2 H2O + H(+). Its pathway is cofactor biosynthesis; thiamine diphosphate biosynthesis. Its function is as follows. Catalyzes the rearrangement of 1-deoxy-D-xylulose 5-phosphate (DXP) to produce the thiazole phosphate moiety of thiamine. Sulfur is provided by the thiocarboxylate moiety of the carrier protein ThiS. In vitro, sulfur can be provided by H(2)S. The chain is Thiazole synthase from Campylobacter jejuni (strain RM1221).